A 300-amino-acid chain; its full sequence is Phosphatidylserine decarboxylase proenzyme (300 aa).

Catalysis depends on charge relay system; for autoendoproteolytic cleavage activity residues aspartate 117, histidine 173, and serine 260. Serine 260 acts as the Schiff-base intermediate with substrate; via pyruvic acid; for decarboxylase activity in catalysis. At serine 260 the chain carries Pyruvic acid (Ser); by autocatalysis.

This sequence belongs to the phosphatidylserine decarboxylase family. PSD-B subfamily. Prokaryotic type II sub-subfamily. In terms of assembly, heterodimer of a large membrane-associated beta subunit and a small pyruvoyl-containing alpha subunit. Requires pyruvate as cofactor. In terms of processing, is synthesized initially as an inactive proenzyme. Formation of the active enzyme involves a self-maturation process in which the active site pyruvoyl group is generated from an internal serine residue via an autocatalytic post-translational modification. Two non-identical subunits are generated from the proenzyme in this reaction, and the pyruvate is formed at the N-terminus of the alpha chain, which is derived from the carboxyl end of the proenzyme. The autoendoproteolytic cleavage occurs by a canonical serine protease mechanism, in which the side chain hydroxyl group of the serine supplies its oxygen atom to form the C-terminus of the beta chain, while the remainder of the serine residue undergoes an oxidative deamination to produce ammonia and the pyruvoyl prosthetic group on the alpha chain. During this reaction, the Ser that is part of the protease active site of the proenzyme becomes the pyruvoyl prosthetic group, which constitutes an essential element of the active site of the mature decarboxylase.

The protein localises to the cell membrane. The enzyme catalyses a 1,2-diacyl-sn-glycero-3-phospho-L-serine + H(+) = a 1,2-diacyl-sn-glycero-3-phosphoethanolamine + CO2. The protein operates within phospholipid metabolism; phosphatidylethanolamine biosynthesis; phosphatidylethanolamine from CDP-diacylglycerol: step 2/2. Functionally, catalyzes the formation of phosphatidylethanolamine (PtdEtn) from phosphatidylserine (PtdSer). The chain is Phosphatidylserine decarboxylase proenzyme from Fusobacterium nucleatum subsp. nucleatum (strain ATCC 25586 / DSM 15643 / BCRC 10681 / CIP 101130 / JCM 8532 / KCTC 2640 / LMG 13131 / VPI 4355).